The primary structure comprises 236 residues: uncharacterized protein (236 aa).

Its subcellular location is the virion. This is an uncharacterized protein from Acanthamoeba polyphaga (Amoeba).